A 430-amino-acid polypeptide reads, in one-letter code: Purine nucleoside phosphorylase LACC1 (430 aa).

An N6-acetyllysine modification is found at Lys247. 3 residues coordinate Zn(2+): His250, Cys284, and His301.

The protein belongs to the purine nucleoside phosphorylase YfiH/LACC1 family. In terms of assembly, interacts with FASN. Interacts with SDHA. Interacts with ATF6, EIF2AK3 and ERN1. Phosphorylated on tyrosine residues. In terms of tissue distribution, ubiquitously expressed, with higher expression levels in immune-related tissues such as lymph nodes and spleen. Expressed in both intestinal and peripheral myeloid-derived cells.

It localises to the cytoplasm. Its subcellular location is the nucleus. The protein localises to the endoplasmic reticulum. The protein resides in the peroxisome. It catalyses the reaction adenosine + phosphate = alpha-D-ribose 1-phosphate + adenine. It carries out the reaction inosine + phosphate = alpha-D-ribose 1-phosphate + hypoxanthine. The enzyme catalyses guanosine + phosphate = alpha-D-ribose 1-phosphate + guanine. The catalysed reaction is S-methyl-5'-thioadenosine + phosphate = 5-(methylsulfanyl)-alpha-D-ribose 1-phosphate + adenine. It catalyses the reaction adenosine + H2O + H(+) = inosine + NH4(+). Its function is as follows. Purine nucleoside enzyme that catalyzes the phosphorolysis of adenosine, guanosine and inosine nucleosides, yielding D-ribose 1-phosphate and the respective free bases, adenine, guanine and hypoxanthine. Also catalyzes the phosphorolysis of S-methyl-5'-thioadenosine into adenine and S-methyl-5-thio-alpha-D-ribose 1-phosphate. Also has adenosine deaminase activity. Acts as a regulator of innate immunity in macrophages by modulating the purine nucleotide metabolism, thereby regulating the metabolic function and bioenergetic state of macrophages. Enables a purine nucleotide cycle between adenosine and inosine monophosphate and adenylosuccinate that prevents cytoplasmic acidification and balances the cytoplasmic-mitochondrial redox interface. The purine nucleotide cycle consumes aspartate and releases fumarate in a manner involving fatty acid oxidation and ATP-citrate lyase activity. Participates in pattern recognition receptor (PRR)-induced cytokines in macrophages: associates with the NOD2-signaling complex and promotes optimal NOD2-induced signaling, cytokine secretion and bacterial clearance. Localizes to the endoplasmic reticulum upon PRR stimulation of macrophages and associates with endoplasmic reticulum-stress sensors, promoting the endoplasmic reticulum unfolded protein response (UPR). Does not show laccase activity. This chain is Purine nucleoside phosphorylase LACC1, found in Homo sapiens (Human).